The sequence spans 94 residues: Small ribosomal subunit protein uS19 (94 aa).

Belongs to the universal ribosomal protein uS19 family.

Functionally, protein S19 forms a complex with S13 that binds strongly to the 16S ribosomal RNA. The sequence is that of Small ribosomal subunit protein uS19 from Finegoldia magna (strain ATCC 29328 / DSM 20472 / WAL 2508) (Peptostreptococcus magnus).